Here is a 538-residue protein sequence, read N- to C-terminus: MAARSLWRTRTKLLVVGTALCGGSGAAFIASSDDPSTTLKLCTSIPVRLYRNTVTAASIAFDYEYSLLGLAEGSSERAKVKHEVHLRSAQKLQELCFKNGGIYIKLGQHIGQLEYLVPEEYVRTMRESMLNKCPISSYEQVCEVFKKEVGEMPDQVFAEFDPVPIASASLAQVHVARTHDGKKVAVKVQHAHMTDTAAADTAAVGVLVNTLHRIFPSFDYRWLLDEMSESLPKELDFLVEAKNNEKCLDNFRKLSPHIAEYVYAPTIYWNLSTSKLLTMEFMDGAQVNDVDKIRKLGIQPYEVSKLVSQTFAEMMFKHGFVHCDPHAANLIVRPDPSGKRNIYGKRKPQLVILDHGLYKELDFNTRFNYASLWKALVFSDAKAIKEHSEKLGAGDDLYVLFAGILTMRPWKQVIDTSVDHLVIQGNKEDVSELQMYASQYFSEISELLRRLPRVILLMLKTNDCLRSVNNELMQGSSLESFLIIGKVSSQAVLEAKRAEKKSLMKWLKVWFEGFSVEARLWVMQFALWILQVRKSLTL.

A signal peptide spans 1–26 (MAARSLWRTRTKLLVVGTALCGGSGA).

This sequence belongs to the protein kinase superfamily. ADCK protein kinase family.

The polypeptide is Putative ABC1 protein At2g40090 (Arabidopsis thaliana (Mouse-ear cress)).